Reading from the N-terminus, the 240-residue chain is NADH-quinone oxidoreductase subunit C (240 aa).

Residues 1–82 (MSEEEKPKPK…PVDENRDPEP (82 aa)) are disordered. A compositionally biased stretch (low complexity) spans 11–20 (LSPALAAKMA). A compositionally biased stretch (basic and acidic residues) spans 67-82 (DKPKAEPVDENRDPEP).

It belongs to the complex I 30 kDa subunit family. As to quaternary structure, NDH-1 is composed of 14 different subunits. Subunits NuoB, C, D, E, F, and G constitute the peripheral sector of the complex.

Its subcellular location is the cell inner membrane. The enzyme catalyses a quinone + NADH + 5 H(+)(in) = a quinol + NAD(+) + 4 H(+)(out). Its function is as follows. NDH-1 shuttles electrons from NADH, via FMN and iron-sulfur (Fe-S) centers, to quinones in the respiratory chain. The immediate electron acceptor for the enzyme in this species is believed to be a menaquinone. Couples the redox reaction to proton translocation (for every two electrons transferred, four hydrogen ions are translocated across the cytoplasmic membrane), and thus conserves the redox energy in a proton gradient. This chain is NADH-quinone oxidoreductase subunit C, found in Chloroherpeton thalassium (strain ATCC 35110 / GB-78).